Consider the following 1101-residue polypeptide: Translation initiation factor IF-2 (1101 aa).

2 disordered regions span residues 81-437 (QEIL…EDDF) and 452-509 (SIST…QRAE). Residues 93 to 108 (PFSSTDAPVGSGQSSP) are compositionally biased toward polar residues. Residues 110-124 (IEPPRPPMKPQPPSP) are compositionally biased toward pro residues. Polar residues-rich tracts occupy residues 128 to 149 (EVTS…GSSS) and 157 to 184 (SPMS…QLKY). The segment covering 185-196 (NQEQSNQLEQES) has biased composition (low complexity). The span at 197 to 206 (AISSELSEVN) shows a compositional bias: polar residues. 3 stretches are compositionally biased toward basic and acidic residues: residues 228–237 (SKEKEAKSNE), 248–288 (KENK…DKKS), and 295–340 (VKRE…ELKR). The span at 361 to 378 (EPEDVEDTAEDLLEEDPL) shows a compositional bias: acidic residues. Basic residues-rich tracts occupy residues 385–397 (PKLK…KVGK) and 414–428 (KAGK…KRRQ). Residues 484 to 506 (EPGRGKSAERERSERKDRKEQPQ) are compositionally biased toward basic and acidic residues. The tr-type G domain maps to 592–765 (RRPPVVTIMG…LLVAEVGELS (174 aa)). Residues 601–608 (GHVDHGKT) form a G1 region. 601–608 (GHVDHGKT) lines the GTP pocket. Positions 626–630 (GITQH) are G2. The segment at 651 to 654 (DTPG) is G3. GTP contacts are provided by residues 651–655 (DTPGH) and 705–708 (NKID). The interval 705–708 (NKID) is G4. The segment at 741–743 (SAL) is G5.

This sequence belongs to the TRAFAC class translation factor GTPase superfamily. Classic translation factor GTPase family. IF-2 subfamily.

The protein resides in the cytoplasm. In terms of biological role, one of the essential components for the initiation of protein synthesis. Protects formylmethionyl-tRNA from spontaneous hydrolysis and promotes its binding to the 30S ribosomal subunits. Also involved in the hydrolysis of GTP during the formation of the 70S ribosomal complex. This is Translation initiation factor IF-2 from Gloeothece citriformis (strain PCC 7424) (Cyanothece sp. (strain PCC 7424)).